A 159-amino-acid chain; its full sequence is MNITLITVGKLKEKYLKDAVNEYAKRLQKYCKLNIIELQDEKTPEKASLKEEKLIKEKEGEKILSSIKDNSYVVSMDLKGKMFSSEEFSAFIDDLGVRGNSSIDFVIGGSLGLSDAVLARANYKLCFSKMTFPHQLFRVMLLEQVYRAFRISRGEPYHK.

Residues Gly108 and 127–132 (FSKMTF) contribute to the S-adenosyl-L-methionine site.

Belongs to the RNA methyltransferase RlmH family. Homodimer.

The protein resides in the cytoplasm. It carries out the reaction pseudouridine(1915) in 23S rRNA + S-adenosyl-L-methionine = N(3)-methylpseudouridine(1915) in 23S rRNA + S-adenosyl-L-homocysteine + H(+). In terms of biological role, specifically methylates the pseudouridine at position 1915 (m3Psi1915) in 23S rRNA. In Clostridium acetobutylicum (strain ATCC 824 / DSM 792 / JCM 1419 / IAM 19013 / LMG 5710 / NBRC 13948 / NRRL B-527 / VKM B-1787 / 2291 / W), this protein is Ribosomal RNA large subunit methyltransferase H.